A 421-amino-acid polypeptide reads, in one-letter code: Cyclin-A2 (421 aa).

An N-acetylmethionine modification is found at Met-1. The tract at residues 1 to 60 (MPGSSRQSGREAGSALLSLQQEDQENVNPEKAAPDQRARAALKTGNARGNAPQQRLKARR) is disordered. Position 5 is a phosphoserine (Ser-5).

This sequence belongs to the cyclin family. Cyclin AB subfamily. Interacts with the CDK1 and CDK2 protein kinases to form serine/threonine kinase holoenzyme complexes. Interacts with CDK1 (hyperphosphorylated form in G1 and underphosphorylated forms in S and G2). Interacts with CDK2; the interaction increases from G1 to G2. Interacts (associated with CDK2 but not with CDK1) with SCAPER; regulates the activity of CCNA2/CDK2 by transiently maintaining CCNA2 in the cytoplasm. Forms a ternary complex with CDK2 and CDKN1B; CDKN1B inhibits the kinase activity of CDK2 through conformational rearrangements. Interacts with INCA1. In terms of processing, polyubiquitinated via 'Lys-11'-linked ubiquitin by the anaphase-promoting complex (APC/C), leading to its degradation by the proteasome. Deubiquitinated and stabilized by USP37 enables entry into S phase. Ubiquitinated during the G1 phase by the SCF(FBXO31) complex, leading to its proteasomal degradation.

Its subcellular location is the nucleus. It is found in the cytoplasm. Functionally, cyclin which controls both the G1/S and the G2/M transition phases of the cell cycle. Functions through the formation of specific serine/threonine kinase holoenzyme complexes with the cyclin-dependent protein kinases CDK1 and CDK2. The cyclin subunit confers the substrate specificity of these complexes and differentially interacts with and activates CDK1 and CDK2 throughout the cell cycle. The sequence is that of Cyclin-A2 from Mesocricetus auratus (Golden hamster).